A 436-amino-acid chain; its full sequence is GTPase Der (436 aa).

2 consecutive EngA-type G domains span residues 4 to 167 (PTVA…PVEE) and 175 to 351 (IRFS…ESQN). Residues 10–17 (GRPNVGKS), 57–61 (DTGGI), 119–122 (NKVD), 181–188 (GRPNVGKS), 229–233 (DTAGM), and 294–297 (NKWD) each bind GTP. Residues 352 to 436 (KRIPSAVLND…PIHLIARKRK (85 aa)) enclose the KH-like domain.

This sequence belongs to the TRAFAC class TrmE-Era-EngA-EngB-Septin-like GTPase superfamily. EngA (Der) GTPase family. Associates with the 50S ribosomal subunit.

Functionally, GTPase that plays an essential role in the late steps of ribosome biogenesis. This chain is GTPase Der, found in Streptococcus pyogenes serotype M1.